Here is a 918-residue protein sequence, read N- to C-terminus: Probable UDP-N-acetylglucosamine--peptide N-acetylglucosaminyltransferase SPINDLY (918 aa).

TPR repeat units follow at residues 34–66, 67–99, 101–132, 140–171, 172–205, 207–238, 239–271, 273–305, 306–339, 341–373, and 374–407; these read GKEAITYAKILRSRNKFVDALAIYELEKDSKNV, EAHIGKGICLQTQNKGNLAFDCFSEAIRLDPHN, CALTHCGILYKDEGRLVEAASYQKALQADPSY, ATVLNDLGTSLKGNTQEGIQKYYEAVKIDPHY, APACYNLGVVYSEMMQYDVALSCYERAATESPTY, DAYCNTGIIYKNRGDLCLAVSPNFEIAKNNMG, IALTDLGTKEKLEGDIDQGVAYYKKALYYNWHY, DAMYNLGVAYGEMLKFDMAIIFDELAFHFNPHC, AEACNNLGVIYKDRDNLDKAVECYQKALSIKPNF, QSLNNLGVVFTVQGKMDAAASMIEKAIVANPTY, and AEAYNNLGVLYRDAGNIFLAIEAYEQCLKIDPDS. The interval 408-918 is catalytic region; the sequence is RNAGQNRLLA…LNCGDQCFRV (511 aa). The segment covering 843-853 has biased composition (polar residues); sequence QLHQQPNTSPQ. The tract at residues 843–877 is disordered; sequence QLHQQPNTSPQKLVKDEPADDASGPEHGPASKDNP.

Belongs to the glycosyltransferase 41 family. O-GlcNAc transferase subfamily.

The protein resides in the nucleus. It catalyses the reaction L-seryl-[protein] + UDP-N-acetyl-alpha-D-glucosamine = 3-O-(N-acetyl-beta-D-glucosaminyl)-L-seryl-[protein] + UDP + H(+). The enzyme catalyses L-threonyl-[protein] + UDP-N-acetyl-alpha-D-glucosamine = 3-O-(N-acetyl-beta-D-glucosaminyl)-L-threonyl-[protein] + UDP + H(+). Its pathway is protein modification; protein glycosylation. Functionally, probable O-linked N-acetylglucosamine transferase (OGT) involved in various processes such as gibberellin (GA) signaling pathway. OGTs catalyze the addition of nucleotide-activated sugars directly onto the polypeptide through O-glycosidic linkage with the hydroxyl of serine or threonine. Probably acts by adding O-linked sugars to yet unknown proteins. May function as a negative regulator of GA signal transduction during vernalization, inhibiting adventitious shoot elongation during vernalization. The protein is Probable UDP-N-acetylglucosamine--peptide N-acetylglucosaminyltransferase SPINDLY (SPY) of Eustoma exaltatum subsp. russellianum (Bluebells).